A 179-amino-acid chain; its full sequence is MSLKQRYRETIQPKLLKDLSLSNIHEVPKVLKITVNRGLGEAAQNAKSLEASITELATITGQKVVVTRAKKAIAGFKIRQGMPIGCAVTLRGERMYAFLERLINLALPRIRDFRGVSPKSFDGRGNYTLGVREQLIFPEISFDKIDAIRGMDITIVTSARTDEEGQSLLREMGMPFRSN.

It belongs to the universal ribosomal protein uL5 family. In terms of assembly, part of the 50S ribosomal subunit; part of the 5S rRNA/L5/L18/L25 subcomplex. Contacts the 5S rRNA and the P site tRNA. Forms a bridge to the 30S subunit in the 70S ribosome.

This is one of the proteins that bind and probably mediate the attachment of the 5S RNA into the large ribosomal subunit, where it forms part of the central protuberance. In the 70S ribosome it contacts protein S13 of the 30S subunit (bridge B1b), connecting the 2 subunits; this bridge is implicated in subunit movement. Contacts the P site tRNA; the 5S rRNA and some of its associated proteins might help stabilize positioning of ribosome-bound tRNAs. This Prochlorococcus marinus (strain MIT 9313) protein is Large ribosomal subunit protein uL5.